Reading from the N-terminus, the 903-residue chain is Probable leucine--tRNA ligase, mitochondrial (903 aa).

Lys-68 bears the N6-acetyllysine mark. Positions 92–102 (YPSGKLHMGHV) match the 'HIGH' region motif. Lys-236 is modified (N6-acetyllysine). Positions 639-643 (KMSKS) match the 'KMSKS' region motif. Position 642 (Lys-642) interacts with ATP. At Ser-711 the chain carries Phosphoserine.

It belongs to the class-I aminoacyl-tRNA synthetase family.

It localises to the mitochondrion matrix. It catalyses the reaction tRNA(Leu) + L-leucine + ATP = L-leucyl-tRNA(Leu) + AMP + diphosphate. The protein is Probable leucine--tRNA ligase, mitochondrial (LARS2) of Pongo abelii (Sumatran orangutan).